Here is an 84-residue protein sequence, read N- to C-terminus: Putative UPF0320 protein YAL068W-A (84 aa).

Belongs to the UPF0320 family.

The polypeptide is Putative UPF0320 protein YAL068W-A (Saccharomyces cerevisiae (strain ATCC 204508 / S288c) (Baker's yeast)).